Reading from the N-terminus, the 173-residue chain is SPbeta prophage-derived putative HNH homing endonuclease YosQ (173 aa).

In terms of biological role, a possible homing endonuclease, it is entirely encoded within the YosP intron. This chain is SPbeta prophage-derived putative HNH homing endonuclease YosQ (yosQ), found in Bacillus subtilis (strain 168).